We begin with the raw amino-acid sequence, 142 residues long: Large ribosomal subunit protein uL11 (142 aa).

Belongs to the universal ribosomal protein uL11 family. In terms of assembly, part of the ribosomal stalk of the 50S ribosomal subunit. Interacts with L10 and the large rRNA to form the base of the stalk. L10 forms an elongated spine to which L12 dimers bind in a sequential fashion forming a multimeric L10(L12)X complex. One or more lysine residues are methylated.

Functionally, forms part of the ribosomal stalk which helps the ribosome interact with GTP-bound translation factors. In Pseudoalteromonas atlantica (strain T6c / ATCC BAA-1087), this protein is Large ribosomal subunit protein uL11.